A 710-amino-acid chain; its full sequence is Polyribonucleotide nucleotidyltransferase (710 aa).

Residues Asp489 and Asp495 each contribute to the Mg(2+) site. The 60-residue stretch at 556-615 (PKIDTIKIDVDKIKVVIGKGGETIDKIIAETGVKIDIDDEGNVSIYSSDQAAINRTKEII) folds into the KH domain. In terms of domain architecture, S1 motif spans 625-693 (GEVYHAKVVR…EKGRVDASMK (69 aa)). The tract at residues 691-710 (SMKALIPRPPKPEKKEEKHD) is disordered. The segment covering 700–710 (PKPEKKEEKHD) has biased composition (basic and acidic residues).

Requires Mg(2+) as cofactor.

Its subcellular location is the cytoplasm. It carries out the reaction RNA(n+1) + phosphate = RNA(n) + a ribonucleoside 5'-diphosphate. Functionally, involved in mRNA degradation. Catalyzes the phosphorolysis of single-stranded polyribonucleotides processively in the 3'- to 5'-direction. The chain is Polyribonucleotide nucleotidyltransferase from Streptococcus pyogenes serotype M6 (strain ATCC BAA-946 / MGAS10394).